The sequence spans 390 residues: Putative 8-amino-7-oxononanoate synthase (390 aa).

Arg-20 serves as a coordination point for substrate. 107–108 lines the pyridoxal 5'-phosphate pocket; that stretch reads GY. His-132 provides a ligand contact to substrate. Pyridoxal 5'-phosphate-binding positions include Ser-181, 206-209, and 237-240; these read DDAH and TLGK. Lys-240 is modified (N6-(pyridoxal phosphate)lysine). Residue Thr-356 coordinates substrate.

Belongs to the class-II pyridoxal-phosphate-dependent aminotransferase family. BioF subfamily. In terms of assembly, homodimer. The cofactor is pyridoxal 5'-phosphate.

The catalysed reaction is 6-carboxyhexanoyl-[ACP] + L-alanine + H(+) = (8S)-8-amino-7-oxononanoate + holo-[ACP] + CO2. Its pathway is cofactor biosynthesis; biotin biosynthesis. Catalyzes the decarboxylative condensation of pimeloyl-[acyl-carrier protein] and L-alanine to produce 8-amino-7-oxononanoate (AON), [acyl-carrier protein], and carbon dioxide. The chain is Putative 8-amino-7-oxononanoate synthase (bioF) from Syntrophotalea carbinolica (strain DSM 2380 / NBRC 103641 / GraBd1) (Pelobacter carbinolicus).